The chain runs to 258 residues: Probable enoyl-CoA hydratase (258 aa).

The protein belongs to the enoyl-CoA hydratase/isomerase family.

The enzyme catalyses a (3S)-3-hydroxyacyl-CoA = a (2E)-enoyl-CoA + H2O. The catalysed reaction is a 4-saturated-(3S)-3-hydroxyacyl-CoA = a (3E)-enoyl-CoA + H2O. The protein operates within lipid metabolism; fatty acid beta-oxidation. In terms of biological role, involved in the degradation of long-chain fatty acids. The polypeptide is Probable enoyl-CoA hydratase (fadB) (Bacillus subtilis (strain 168)).